The chain runs to 251 residues: Ubiquitin-conjugating enzyme E2 6 (251 aa).

Residues 1-229 (MASIQANKRL…DQDKNPGENS (229 aa)) lie on the Cytoplasmic side of the membrane. Positions 5–154 (QANKRLTKEY…YSNFKFKNMF (150 aa)) constitute a UBC core domain. Catalysis depends on cysteine 87, which acts as the Glycyl thioester intermediate. Residues 173–185 (AESKGAQQEENKA) show a composition bias toward basic and acidic residues. The disordered stretch occupies residues 173-200 (AESKGAQQEENKAQKLATEKATSLDDIS). The helical transmembrane segment at 230-250 (NIKSLLCLILAIAIFFVGLIM) threads the bilayer.

It belongs to the ubiquitin-conjugating enzyme family.

Its subcellular location is the endoplasmic reticulum membrane. The catalysed reaction is S-ubiquitinyl-[E1 ubiquitin-activating enzyme]-L-cysteine + [E2 ubiquitin-conjugating enzyme]-L-cysteine = [E1 ubiquitin-activating enzyme]-L-cysteine + S-ubiquitinyl-[E2 ubiquitin-conjugating enzyme]-L-cysteine.. It functions in the pathway protein modification; protein ubiquitination. In terms of biological role, catalyzes the covalent attachment of ubiquitin to other proteins. Functions in degradation of misfolded or regulated proteins localized in the endoplasmic reticulum (ER) lumen or membrane via the ubiquitin-proteasome system. Cognate E2 conjugating enzyme for the DOA10 ubiquitin ligase complex, which is part of the ERAD-C pathway responsible for the rapid degradation of membrane proteins with misfolded cytoplasmic domains. In Kluyveromyces lactis (strain ATCC 8585 / CBS 2359 / DSM 70799 / NBRC 1267 / NRRL Y-1140 / WM37) (Yeast), this protein is Ubiquitin-conjugating enzyme E2 6 (UBC6).